Here is a 160-residue protein sequence, read N- to C-terminus: Transcription antitermination protein NusB (160 aa).

Belongs to the NusB family.

Functionally, involved in transcription antitermination. Required for transcription of ribosomal RNA (rRNA) genes. Binds specifically to the boxA antiterminator sequence of the ribosomal RNA (rrn) operons. The protein is Transcription antitermination protein NusB of Sinorhizobium fredii (strain NBRC 101917 / NGR234).